The primary structure comprises 366 residues: Anhydro-N-acetylmuramic acid kinase (366 aa).

10–17 (GTSLDGVD) is an ATP binding site.

The protein belongs to the anhydro-N-acetylmuramic acid kinase family.

It carries out the reaction 1,6-anhydro-N-acetyl-beta-muramate + ATP + H2O = N-acetyl-D-muramate 6-phosphate + ADP + H(+). It functions in the pathway amino-sugar metabolism; 1,6-anhydro-N-acetylmuramate degradation. Its pathway is cell wall biogenesis; peptidoglycan recycling. Its function is as follows. Catalyzes the specific phosphorylation of 1,6-anhydro-N-acetylmuramic acid (anhMurNAc) with the simultaneous cleavage of the 1,6-anhydro ring, generating MurNAc-6-P. Is required for the utilization of anhMurNAc either imported from the medium or derived from its own cell wall murein, and thus plays a role in cell wall recycling. This chain is Anhydro-N-acetylmuramic acid kinase, found in Nitrobacter winogradskyi (strain ATCC 25391 / DSM 10237 / CIP 104748 / NCIMB 11846 / Nb-255).